Here is a 298-residue protein sequence, read N- to C-terminus: UDP-N-acetylenolpyruvoylglucosamine reductase (298 aa).

Residues 26–191 (KTGGAADVFV…LDATFSLALE (166 aa)) form the FAD-binding PCMH-type domain. Residue R170 is part of the active site. S220 serves as the catalytic Proton donor. E290 is an active-site residue.

The protein belongs to the MurB family. Requires FAD as cofactor.

The protein localises to the cytoplasm. It catalyses the reaction UDP-N-acetyl-alpha-D-muramate + NADP(+) = UDP-N-acetyl-3-O-(1-carboxyvinyl)-alpha-D-glucosamine + NADPH + H(+). It functions in the pathway cell wall biogenesis; peptidoglycan biosynthesis. Functionally, cell wall formation. The sequence is that of UDP-N-acetylenolpyruvoylglucosamine reductase from Listeria monocytogenes serotype 4b (strain CLIP80459).